The following is a 281-amino-acid chain: General control transcription factor GCN4 (281 aa).

Ser17 carries the post-translational modification Phosphoserine. Required for transcriptional activation stretches follow at residues 89–100 and 106–125; these read LDDAVVESFFSS and PMFE…SLFD. Thr165 bears the Phosphothreonine; by PHO85 mark. Residues 167 to 200 carry the Nuclear localization signal motif; the sequence is VLEDAKLTQTRKVKKPNSVVKKSHHVGKDDESRL. Residues 217 to 248 are disordered; it reads LSPIVPESSDPAALKRARNTEAARRSRARKLQ. Ser218 bears the Phosphoserine mark. The bZIP domain occupies 225–281; that stretch reads SDPAALKRARNTEAARRSRARKLQRMKQLEDKVEELLSKNYHLENEVARLKKLVGER. The short motif at 231 to 249 is the Nuclear localization signal element; it reads KRARNTEAARRSRARKLQR. A basic motif region spans residues 231–251; sequence KRARNTEAARRSRARKLQRMK. The leucine-zipper stretch occupies residues 253–274; that stretch reads LEDKVEELLSKNYHLENEVARL.

Belongs to the bZIP family. GCN4 subfamily. Homodimer. Each subunit binds overlapping and non-identical half-sites that flank the central CG base-pair in the pseudo-palindromic motif 5'-ATGA[CG]TCAT-3'. Interacts with the mediator tail; the interaction with GAL11/MED15 is direct. Interacts with the SAGA histone acetyltransferase complex. Interacts with the SWI/SNF chromatin remodeling complex. Post-translationally, phosphorylated by the cyclin-CDK PCL5-PHO85. Phosphorylation of Thr-165 induces degradation of GCN4 by the E3 ubiquitin ligase complex SCF(Cdc4).

Its subcellular location is the nucleus. Master transcriptional regulator that mediates the response to amino acid starvation. Binds variations of the DNA sequence 5'-ATGA[CG]TCAT-3' in canonical nucleosome-depleted 5'-positioned promoters, and also within coding sequences and 3' non-coding regions. During nutrient starvation (low or poor amino acid, carbon or purine sources), it activates genes required for amino acid biosynthesis and transport, autophagy, cofactor biosynthesis and transport, mitochondrial transport, and additional downstream transcription factors. Activates transcription by recruiting multiple coactivators, including the mediator complex, the SAGA complex, and the SWI/SNF complex, to enable assembly of the pre-initiation complex at core promoters. The protein is General control transcription factor GCN4 of Saccharomyces cerevisiae (strain ATCC 204508 / S288c) (Baker's yeast).